Here is an 82-residue protein sequence, read N- to C-terminus: ATP synthase subunit c, chloroplastic (82 aa).

2 helical membrane passes run 3-23 (PIVAAASVIAAGLAVGLAAIG) and 57-77 (FAFMESLTIYGLVVALALLFA).

The protein belongs to the ATPase C chain family. As to quaternary structure, F-type ATPases have 2 components, F(1) - the catalytic core - and F(0) - the membrane proton channel. F(1) has five subunits: alpha(3), beta(3), gamma(1), delta(1), epsilon(1). F(0) has four main subunits: a(1), b(1), b'(1) and c(10-14). The alpha and beta chains form an alternating ring which encloses part of the gamma chain. F(1) is attached to F(0) by a central stalk formed by the gamma and epsilon chains, while a peripheral stalk is formed by the delta, b and b' chains.

It is found in the plastid. Its subcellular location is the chloroplast thylakoid membrane. Its function is as follows. F(1)F(0) ATP synthase produces ATP from ADP in the presence of a proton or sodium gradient. F-type ATPases consist of two structural domains, F(1) containing the extramembraneous catalytic core and F(0) containing the membrane proton channel, linked together by a central stalk and a peripheral stalk. During catalysis, ATP synthesis in the catalytic domain of F(1) is coupled via a rotary mechanism of the central stalk subunits to proton translocation. Functionally, key component of the F(0) channel; it plays a direct role in translocation across the membrane. A homomeric c-ring of between 10-14 subunits forms the central stalk rotor element with the F(1) delta and epsilon subunits. This Chlorella vulgaris (Green alga) protein is ATP synthase subunit c, chloroplastic.